A 213-amino-acid polypeptide reads, in one-letter code: ATP-dependent Clp protease proteolytic subunit (213 aa).

The Nucleophile role is filled by serine 114. The active site involves histidine 139.

It belongs to the peptidase S14 family. As to quaternary structure, fourteen ClpP subunits assemble into 2 heptameric rings which stack back to back to give a disk-like structure with a central cavity, resembling the structure of eukaryotic proteasomes.

The protein resides in the cytoplasm. It carries out the reaction Hydrolysis of proteins to small peptides in the presence of ATP and magnesium. alpha-casein is the usual test substrate. In the absence of ATP, only oligopeptides shorter than five residues are hydrolyzed (such as succinyl-Leu-Tyr-|-NHMec, and Leu-Tyr-Leu-|-Tyr-Trp, in which cleavage of the -Tyr-|-Leu- and -Tyr-|-Trp bonds also occurs).. Functionally, cleaves peptides in various proteins in a process that requires ATP hydrolysis. Has a chymotrypsin-like activity. Plays a major role in the degradation of misfolded proteins. The sequence is that of ATP-dependent Clp protease proteolytic subunit from Pseudomonas putida (strain ATCC 47054 / DSM 6125 / CFBP 8728 / NCIMB 11950 / KT2440).